Here is a 364-residue protein sequence, read N- to C-terminus: Medium-wave-sensitive opsin 1 (364 aa).

The disordered stretch occupies residues 1 to 24 (MAQRWDPQRLAGGQPQDSHEDSTQ). The Extracellular portion of the chain corresponds to 1-52 (MAQRWDPQRLAGGQPQDSHEDSTQSSIFTYTNSNATRGPFEGPNYHIAPRWV). The tract at residues 17 to 43 (DSHEDSTQSSIFTYTNSNATRGPFEGP) is required for 11-cis-retinal regeneration. N-linked (GlcNAc...) asparagine glycosylation occurs at N34. A helical transmembrane segment spans residues 53-77 (YHITSTWMIIVVIASVFTNGLVLVA). At 78–89 (TMKFKKLRHPLN) the chain is on the cytoplasmic side. The helical transmembrane segment at 90–115 (WILVNLAIADLAETVIASTISVVNQL) threads the bilayer. Topologically, residues 116-129 (YGYFVLGHPLCVVE) are extracellular. C126 and C203 are disulfide-bonded. Residues 130-149 (GYTVSVCGITGLWSLAIISW) form a helical membrane-spanning segment. Over 150–168 (ERWLVVCKPFGNMRFDAKL) the chain is Cytoplasmic. A helical membrane pass occupies residues 169–192 (AIVGIAFSWIWSAVWTAPPIFGWS). Residues 193 to 218 (RYWPYGLKTSCGPDVFSGTSYPGVQS) are Extracellular-facing. A helical membrane pass occupies residues 219–246 (YMMVLMVTCCIIPLSIIILCYLQVWLAI). Residues 247–268 (RAVAKQQKESESTQKAEKEVTR) lie on the Cytoplasmic side of the membrane. Residues 269 to 292 (MVVVMVFAYCLCWGPYTFFACFAT) traverse the membrane as a helical segment. Residues 293-300 (ANPGYAFH) lie on the Extracellular side of the membrane. A helical transmembrane segment spans residues 301 to 320 (PLVAALPAYFAKSATIYNPI). K312 is modified (N6-(retinylidene)lysine). Over 321 to 364 (IYVFMNRQFRNCILQLFGKKVDDTSELSSASKTEASSVSSVSPA) the chain is Cytoplasmic.

Belongs to the G-protein coupled receptor 1 family. Opsin subfamily. As to quaternary structure, monomer. Homodimer. Homotetramer. In terms of processing, O-glycosylated. Post-translationally, phosphorylated on some or all of the serine and threonine residues present in the C-terminal region. In terms of tissue distribution, expressed in cone photoreceptor cells.

The protein resides in the membrane. Visual pigments are the light-absorbing molecules that mediate vision. They consist of an apoprotein, opsin, covalently linked to cis-retinal. May increase spectral sensitivity in dim light. In Sciurus carolinensis (Eastern gray squirrel), this protein is Medium-wave-sensitive opsin 1 (OPN1MW).